A 167-amino-acid chain; its full sequence is RNA pyrophosphohydrolase (167 aa).

In terms of domain architecture, Nudix hydrolase spans 7–160 (PYRPCVGVMV…KRRAYEEVVA (154 aa)). The Nudix box signature appears at 48–69 (GGIDEGEDPLEAACRELYEETG).

It belongs to the Nudix hydrolase family. RppH subfamily. The cofactor is a divalent metal cation.

Its function is as follows. Accelerates the degradation of transcripts by removing pyrophosphate from the 5'-end of triphosphorylated RNA, leading to a more labile monophosphorylated state that can stimulate subsequent ribonuclease cleavage. The protein is RNA pyrophosphohydrolase of Rhizobium meliloti (strain 1021) (Ensifer meliloti).